We begin with the raw amino-acid sequence, 251 residues long: Cell division protein ZapD (251 aa).

It belongs to the ZapD family. As to quaternary structure, interacts with FtsZ.

The protein resides in the cytoplasm. Its function is as follows. Cell division factor that enhances FtsZ-ring assembly. Directly interacts with FtsZ and promotes bundling of FtsZ protofilaments, with a reduction in FtsZ GTPase activity. This is Cell division protein ZapD from Janthinobacterium sp. (strain Marseille) (Minibacterium massiliensis).